We begin with the raw amino-acid sequence, 31 residues long: Ranatuerin-2 (31 aa).

Cys23 and Cys28 form a disulfide bridge.

Belongs to the frog skin active peptide (FSAP) family. Ranatuerin subfamily. As to expression, expressed by the skin glands.

It is found in the secreted. Its function is as follows. Antibacterial activity against Gram-positive bacterium S.aureus (MIC=60 uM). Shows no detectable hemolytic activity towards human erythrocytes. The sequence is that of Ranatuerin-2 from Aquarana catesbeiana (American bullfrog).